Consider the following 128-residue polypeptide: MRFAIVVTGPAYGTQQASSAFQFAQALIAEGHELSSVFFYREGVYNANQLTSPASDEFDLVRGWQQLNAQHGVALNICVAAALRRGIVDETEAGRLGLASSNLQPGFTLSGLGALAEASLTCDRVVQF.

Catalysis depends on cysteine 78, which acts as the Cysteine persulfide intermediate.

Belongs to the DsrE/TusD family. As to quaternary structure, heterohexamer, formed by a dimer of trimers. The hexameric TusBCD complex contains 2 copies each of TusB, TusC and TusD. The TusBCD complex interacts with TusE.

The protein resides in the cytoplasm. In terms of biological role, part of a sulfur-relay system required for 2-thiolation of 5-methylaminomethyl-2-thiouridine (mnm(5)s(2)U) at tRNA wobble positions. Accepts sulfur from TusA and transfers it in turn to TusE. In Escherichia coli (strain 55989 / EAEC), this protein is Sulfurtransferase TusD.